We begin with the raw amino-acid sequence, 345 residues long: MESTLGLEIIEVVEQAAIASSKWMGKGEKNTADHVAVEAMRERMNKIHMRGRIVIGEGERDEAPMLYIGEEVGICTQVDAKQYCNPDELVEIDIAVDPCEGTNLVAYGQNGSMAVLAISEKGGLFAAPDFYMKKLAAPPAAKGHVDINKSATENLKVLSDCLNRSIEELVVVVMDRPRHKELIQEIRNAGARVRLISDGDVSAAISCAFSGTNIHALMGIGAAPEGVISAAAMRCLGGHFQGQLIYDPEVVKTGLIGESREGNLARLQEMGITNPDRVYGCEELASGETVLFAACGITPGTLMEGVRFFHGGARTQSLVISTQSKTARFVDTVHLFDRPKYIQLR.

Mn(2+) is bound by residues Asp-33, Glu-57, Asp-97, and Glu-100. Residues 100–102 (EGT), Tyr-131, 176–178 (RPR), and 198–200 (DGD) each bind substrate. Glu-225 is a Mn(2+) binding site.

It belongs to the FBPase class 2 family. In terms of assembly, homotetramer. Mn(2+) is required as a cofactor.

The enzyme catalyses beta-D-fructose 1,6-bisphosphate + H2O = beta-D-fructose 6-phosphate + phosphate. It carries out the reaction D-sedoheptulose 1,7-bisphosphate + H2O = D-sedoheptulose 7-phosphate + phosphate. It functions in the pathway carbohydrate biosynthesis; Calvin cycle. Catalyzes the hydrolysis of fructose 1,6-bisphosphate (Fru 1,6-P2) and sedoheptulose 1,7-bisphosphate (Sed 1,7-P2) to fructose 6-phosphate and sedoheptulose 7-phosphate, respectively. The polypeptide is D-fructose 1,6-bisphosphatase class 2/sedoheptulose 1,7-bisphosphatase (Microcystis aeruginosa (strain NIES-843 / IAM M-2473)).